A 662-amino-acid polypeptide reads, in one-letter code: Retaining alpha-galactosidase (662 aa).

The N-terminal stretch at 1–19 (MKKLTFLLLCVLCTLSLQA) is a signal peptide. E174 is a binding site for Ca(2+). D415 functions as the Nucleophile in the catalytic mechanism. Positions 464 and 470 each coordinate Ca(2+). Residue E470 is the Proton donor/acceptor of the active site.

The protein belongs to the glycosyl hydrolase 97 family. Monomer. Requires Ca(2+) as cofactor.

The catalysed reaction is Hydrolysis of terminal, non-reducing alpha-D-galactose residues in alpha-D-galactosides, including galactose oligosaccharides, galactomannans and galactolipids.. Inhibited by EDTA in vitro. In terms of biological role, galactosidase that is able to hydrolyze the alpha-1,6 disaccharide melibiose and the synthetic p-nitrophenyl alpha-galactoside substrate (pNP-Gal), with retention of the anomeric configuration. Does not hydrolyze DNP-Glc or pNP-Glc. This is Retaining alpha-galactosidase from Bacteroides thetaiotaomicron (strain ATCC 29148 / DSM 2079 / JCM 5827 / CCUG 10774 / NCTC 10582 / VPI-5482 / E50).